A 345-amino-acid chain; its full sequence is GTPase Obg (345 aa).

An Obg domain is found at 1–159; that stretch reads MKFIDEAIIK…RTLRLELKLL (159 aa). Residues 127 to 148 are disordered; sequence NARFKSSTNRAPRKTTQGKPGE. The segment covering 130-144 has biased composition (polar residues); the sequence is FKSSTNRAPRKTTQG. The region spanning 160–334 is the OBG-type G domain; the sequence is ADVGLLGLPN…LIHAVMQYLE (175 aa). Residues 166-173, 191-195, 213-216, 284-287, and 315-317 each bind GTP; these read GLPNAGKS, FTTLH, DIPG, NKTD, and SAL. Residues serine 173 and threonine 193 each contribute to the Mg(2+) site.

This sequence belongs to the TRAFAC class OBG-HflX-like GTPase superfamily. OBG GTPase family. As to quaternary structure, monomer. Mg(2+) is required as a cofactor.

The protein resides in the cytoplasm. In terms of biological role, an essential GTPase which binds GTP, GDP and possibly (p)ppGpp with moderate affinity, with high nucleotide exchange rates and a fairly low GTP hydrolysis rate. Plays a role in control of the cell cycle, stress response, ribosome biogenesis and in those bacteria that undergo differentiation, in morphogenesis control. The polypeptide is GTPase Obg (Nitrosococcus oceani (strain ATCC 19707 / BCRC 17464 / JCM 30415 / NCIMB 11848 / C-107)).